The following is a 360-amino-acid chain: MKLVFRWYGEKHDTVTLEQIRQIPGVEGVVGALFDIPVGEVWPLEEIMKLKETVEKAGLKLEVIESVNVHEDIKLGLPTRDRYIENYKETIRNLAKAGVKVVCYNFMPVFDWMRTDLHKKLPDGSETMEYDHRLIEGVTPDELIKRVKEGSQGFVLPGWEWDRLEKLRETFELYKNVDEEKLFENLVYFLERVIPVCEECDVKLAIHPDDPPWSIFGLPRIITNKENIERMLKAVDSPYNGITFCMGSLGANPENNIPEMIRYFGKMGRIHFAHVRNLKFTGEKSFYETAHPSFCGSHDLFEVMKAFHDIGYEGYIRPDHGRLIWGEKARPGYGLYDRALGATYILGLWEAIDKMKKRYC.

The protein belongs to the mannonate dehydratase family. Fe(2+) is required as a cofactor. The cofactor is Mn(2+).

It catalyses the reaction D-mannonate = 2-dehydro-3-deoxy-D-gluconate + H2O. The protein operates within carbohydrate metabolism; pentose and glucuronate interconversion. Functionally, catalyzes the dehydration of D-mannonate. In Thermotoga sp. (strain RQ2), this protein is Mannonate dehydratase.